Reading from the N-terminus, the 398-residue chain is T-box transcription factor TBX1 (398 aa).

Residues 23-72 form a disordered region; that stretch reads AAGGFPGAASPGADPYGPREPPPPPPRYDPCAAAAPGAPGPPPPPHAYPF. The segment covering 29–38 has biased composition (low complexity); sequence GAASPGADPY. 2 stretches are compositionally biased toward pro residues: residues 40-50 and 60-69; these read PREPPPPPPRY and APGPPPPPHA. The segment at residues 119 to 297 is a DNA-binding region (T-box); it reads LWDEFNQLGT…SNPFAKGFRD (179 aa).

In terms of assembly, binds DNA as a dimer. Interacts with DSCR6. Interacts with NKX2-5.

The protein resides in the nucleus. Its function is as follows. Transcription factor that plays a key role in cardiovascular development by promoting pharyngeal arch segmentation during embryonic development. Also involved in craniofacial muscle development. Together with NKX2-5, acts as a regulator of asymmetric cardiac morphogenesis by promoting expression of PITX2. Acts upstream of TBX1 for the formation of the thymus and parathyroid glands from the third pharyngeal pouch. Required for hair follicle stem cell self-renewal. Binds to the palindromic T site 5'-TTCACACCTAGGTGTGAA-3' DNA sequence. In Homo sapiens (Human), this protein is T-box transcription factor TBX1.